The following is a 316-amino-acid chain: C-type lectin domain family 10 member A (316 aa).

Over 1–39 (MTRTYENFQYLENKVKVQGFKNGPLPLQSLLQRLCSGPC) the chain is Cytoplasmic. The short motif at 5 to 8 (YENF) is the Endocytosis signal element. Residues 40–60 (HLLLSLGLGLLLLVIICVVGF) traverse the membrane as a helical; Signal-anchor for type II membrane protein segment. The Extracellular portion of the chain corresponds to 61-316 (QNSKFQRDLV…GLGQTSQESH (256 aa)). Residues asparagine 78 and asparagine 173 are each glycosylated (N-linked (GlcNAc...) asparagine). The stretch at 85 to 176 (AEIQALTSQG…VATLNNNAST (92 aa)) forms a coiled coil. 3 disulfides stabilise this stretch: cysteine 181–cysteine 192, cysteine 209–cysteine 304, and cysteine 282–cysteine 296. One can recognise a C-type lectin domain in the interval 188–305 (HQDSCYWFSH…CQRPYHWVCE (118 aa)). Residues valine 218, asparagine 220, glutamate 224, and aspartate 243 each coordinate Ca(2+). Positions 267 and 269 each coordinate a glycoprotein. Aspartate 269, aspartate 270, glutamate 280, and aspartate 281 together coordinate Ca(2+). Glutamate 280 lines the a glycoprotein pocket. Histidine 286 and asparagine 292 together coordinate a glycoprotein. Asparagine 292, aspartate 293, and glutamate 305 together coordinate Ca(2+).

As to quaternary structure, interacts with A-, B- and C-domain containing PTPRC/CD45 isoforms: isoform 1/CD45ABC, isoform 3/CD45AB, isoform 5/CD45BC and isoform 7/CD45B. Does not interact with PTPRC/CD45 isoform 2/CD45RO, a memory T cell marker. In terms of tissue distribution, expressed in myeloid antigen presenting cells in lymph nodes and skin (at protein level). Expressed in dermal dendritic cells (at protein level).

The protein resides in the cell membrane. It is found in the early endosome membrane. The protein localises to the lysosome membrane. In terms of biological role, C-type lectin receptor involved in recognition of N-acetylgalactosamine (GalNAc)-terminated glycans by myeloid antigen presenting cells (APCs). Binds in a Ca(2+)-dependent manner to alpha- and beta-linked GalNAc residues on glycoprotein and glycolipid antigens, including alphaGalNAc- and Galbeta1-&gt;3GalNAc-O-Ser/Thr also known as Tn and T antigens, LacdiNAc epitope GalNAcbeta1-&gt;4GlcNAc and its derivative GalNAcbeta1-&gt;4-(Fucalpha1-&gt;3)GlcNAc, O-linked core 5 and 6 glycans, and GM2 and GD2 gangliosides. Acts as a signaling receptor at the interface of APC-T cell interactions. On immature dendritic cells, recognizes Tn antigen-carrying PTPRC/CD45 receptor on effector T cells and downregulates PTRPN/CD45 phosphatase activity with an impact on T cell activation threshold, cytokine production and proliferation. Modulates dendritic cell maturation toward a tolerogenic phenotype leading to generation of regulatory CD4-positive T cell subset with immune suppressive functions. Acts as an endocytic pattern recognition receptor involved in antitumor immunity. During tumorigenesis, recognizes Tn antigens and its sialylated forms Neu5Ac-Tn and Neu5Gc-Tn expressed on tumor cell mucins. On immature dendritic cells, can internalize Tn-terminated immunogens and target them to endolysosomal compartment for MHC class I and II antigen presentation to CD8-positive and CD4-positive T cells, respectively. This chain is C-type lectin domain family 10 member A, found in Homo sapiens (Human).